We begin with the raw amino-acid sequence, 126 residues long: Aspartate 1-decarboxylase (126 aa).

The active-site Schiff-base intermediate with substrate; via pyruvic acid is Ser-25. Residue Ser-25 is modified to Pyruvic acid (Ser). A substrate-binding site is contributed by Thr-57. Tyr-58 serves as the catalytic Proton donor. A substrate-binding site is contributed by 73 to 75 (GAA).

This sequence belongs to the PanD family. As to quaternary structure, heterooctamer of four alpha and four beta subunits. It depends on pyruvate as a cofactor. In terms of processing, is synthesized initially as an inactive proenzyme, which is activated by self-cleavage at a specific serine bond to produce a beta-subunit with a hydroxyl group at its C-terminus and an alpha-subunit with a pyruvoyl group at its N-terminus.

It is found in the cytoplasm. The catalysed reaction is L-aspartate + H(+) = beta-alanine + CO2. It functions in the pathway cofactor biosynthesis; (R)-pantothenate biosynthesis; beta-alanine from L-aspartate: step 1/1. Functionally, catalyzes the pyruvoyl-dependent decarboxylation of aspartate to produce beta-alanine. The chain is Aspartate 1-decarboxylase from Pectobacterium carotovorum subsp. carotovorum (strain PC1).